A 398-amino-acid chain; its full sequence is Carbamoyl phosphate synthase small chain (398 aa).

2 CPSase regions span residues 1-205 (MTQT…TNDA) and 1-207 (MTQT…DACN). Residues Ser-60, Gly-257, and Gly-259 each coordinate L-glutamine. The 189-residue stretch at 209-397 (HIVAIDYGIK…FNLIMDYKRT (189 aa)) folds into the Glutamine amidotransferase type-1 domain. Catalysis depends on Cys-286, which acts as the Nucleophile. L-glutamine is bound by residues Leu-287, Gln-290, Asn-328, Gly-330, and Phe-331. Active-site residues include His-370 and Glu-372.

This sequence belongs to the CarA family. In terms of assembly, composed of two chains; the small (or glutamine) chain promotes the hydrolysis of glutamine to ammonia, which is used by the large (or ammonia) chain to synthesize carbamoyl phosphate. Tetramer of heterodimers (alpha,beta)4.

It carries out the reaction hydrogencarbonate + L-glutamine + 2 ATP + H2O = carbamoyl phosphate + L-glutamate + 2 ADP + phosphate + 2 H(+). The catalysed reaction is L-glutamine + H2O = L-glutamate + NH4(+). It functions in the pathway amino-acid biosynthesis; L-arginine biosynthesis; carbamoyl phosphate from bicarbonate: step 1/1. The protein operates within pyrimidine metabolism; UMP biosynthesis via de novo pathway; (S)-dihydroorotate from bicarbonate: step 1/3. In terms of biological role, small subunit of the glutamine-dependent carbamoyl phosphate synthetase (CPSase). CPSase catalyzes the formation of carbamoyl phosphate from the ammonia moiety of glutamine, carbonate, and phosphate donated by ATP, constituting the first step of 2 biosynthetic pathways, one leading to arginine and/or urea and the other to pyrimidine nucleotides. The small subunit (glutamine amidotransferase) binds and cleaves glutamine to supply the large subunit with the substrate ammonia. The chain is Carbamoyl phosphate synthase small chain from Bartonella quintana (strain Toulouse) (Rochalimaea quintana).